A 291-amino-acid polypeptide reads, in one-letter code: MGVAARPPALRHWFSHSIPLAIFALLLLYLSVRSLGARSGCGPRAQPCVPGETAPFQVRQESGTLEAPERKQPPCLGPRGMLGRMMRRFHASLKPEGDVGLSPYLAGWRALVEFLTPLGSVFAFATREAFTKVTDLEARVHGPDAEHYWSLVAMAAWERRAGLLEQPGAAPRDPTRSSGSRTLLLLHRALRWSQLCLHRVATGALGGPDAGVQCSDAYRAALGPHHPWLVRQTARLAFLAFPGRRRLLELACPGATEAEARAALVRAAGTLEDVYNRTQSLLAERGLLQLA.

N-linked (GlcNAc...) asparagine glycosylation is present at N276.

This sequence belongs to the GLTP family.

This Homo sapiens (Human) protein is Glycolipid transfer protein domain-containing protein 2 (GLTPD2).